A 611-amino-acid polypeptide reads, in one-letter code: Endo-1,4-beta-xylanase A (611 aa).

The N-terminal stretch at 1–26 (MRTAMAKSLGAAAFLGAALFAHTLAA) is a signal peptide. Residues 27–128 (QTATCSYNIT…SVGGSICSGS (102 aa)) form the CBM2 domain. 3 disulfides stabilise this stretch: C31–C125, C184–C215, and C194–C209. A CBM10 domain is found at 183–212 (QCNWYGTLYPLCVTTTNGWGWEDQRSCIAR). In terms of domain architecture, GH10 spans 281–607 (SGGNADIFTS…KPAYQGVVEA (327 aa)). E391 functions as the Proton donor in the catalytic mechanism. Residue E510 is the Nucleophile of the active site.

This sequence belongs to the glycosyl hydrolase 10 (cellulase F) family.

It catalyses the reaction Endohydrolysis of (1-&gt;4)-beta-D-xylosidic linkages in xylans.. It functions in the pathway glycan degradation; xylan degradation. In Cellvibrio japonicus (strain Ueda107) (Pseudomonas fluorescens subsp. cellulosa), this protein is Endo-1,4-beta-xylanase A (xynA).